Consider the following 99-residue polypeptide: Large ribosomal subunit protein P1 (99 aa).

Part of the 50S ribosomal subunit. Homodimer, it forms part of the ribosomal stalk which helps the ribosome interact with GTP-bound translation factors. Forms both a pentameric uL10/P0(P1)2(P1)2 and heptameric uL10/P0(P1)2(P1)2(P1)2 complex, where uL10/P0 forms an elongated spine to which the P1 dimers bind in a sequential fashion. The proportion of heptameric complexes increases during cell growth.

Functionally, forms part of the ribosomal stalk, playing a central role in the interaction of the ribosome with GTP-bound translation factors. This chain is Large ribosomal subunit protein P1, found in Methanococcus vannielii.